Here is a 250-residue protein sequence, read N- to C-terminus: Vacuolar iron transporter 1 (250 aa).

Topologically, residues 1–37 (MSSEEDKITRISIEPEKQTLLDHHTEKHFTAGEIVRD) are cytoplasmic. The helical transmembrane segment at 38–58 (IIIGVSDGLTVPFALAAGLSG) threads the bilayer. Topologically, residues 59-64 (ANASSS) are vacuolar. A helical transmembrane segment spans residues 65–85 (IVLTAGIAEVAAGAISMGLGG). Residues 86–169 (YLAAKSEEDH…PDPKRALQSA (84 aa)) are Cytoplasmic-facing. A cytoplasmic metal binding domain (MBD) region spans residues 91–166 (SEEDHYAREM…LEKPDPKRAL (76 aa)). Residues Glu-103, Glu-106, Glu-114, Glu-117, Met-150, and Glu-154 each contribute to the Fe cation site. A helical transmembrane segment spans residues 170–190 (FTIAIAYVLGGFIPLLPYMLI). At 191-192 (PH) the chain is on the vacuolar side. A helical membrane pass occupies residues 193–213 (AMDAVVASVVITLFALFIFGY). Over 214–227 (AKGHFTGSKPLRSA) the chain is Cytoplasmic. A helical transmembrane segment spans residues 228-248 (FETAFIGAIASAAAFCLAKVV). At 249–250 (QH) the chain is on the vacuolar side.

It belongs to the CCC1 family. Homodimer. The dimeric interaction is mediated by both the transmembrane domains (TMDs) and the cytoplasmic metal binding domain (MBD). Highly expressed in developing embryo and seed. Expressed in young seedlings, predominantly in the vasculature.

It localises to the vacuole membrane. The catalysed reaction is Fe(2+)(in) = Fe(2+)(out). Its function is as follows. Vacuolar iron transporter involved in the transfer of iron ions from the cytosol to the vacuole for intracellular iron storage. Involved in regulation of cellular iron homeostasis. Vacuolar iron storage is required for seed embryo and seedling development. The chain is Vacuolar iron transporter 1 from Arabidopsis thaliana (Mouse-ear cress).